Here is a 733-residue protein sequence, read N- to C-terminus: EF-hand domain-containing family member C2 (733 aa).

3 DM10 domains span residues 61–168, 212–354, and 416–523; these read DKQV…TKIG, DRKV…RTKY, and ISNT…ERNS.

As to quaternary structure, microtubule inner protein component of sperm flagellar doublet microtubules. Expressed in trachea multiciliated cells.

It is found in the cytoplasm. It localises to the cytoskeleton. The protein localises to the cilium axoneme. Its subcellular location is the flagellum axoneme. Functionally, microtubule inner protein (MIP) part of the dynein-decorated doublet microtubules (DMTs) in cilia axoneme, which is required for motile cilia beating. This chain is EF-hand domain-containing family member C2 (EFHC2), found in Bos taurus (Bovine).